We begin with the raw amino-acid sequence, 222 residues long: Ribosomal RNA small subunit methyltransferase G (222 aa).

S-adenosyl-L-methionine contacts are provided by residues glycine 80, leucine 85, 131 to 132, and arginine 148; that span reads VE.

This sequence belongs to the methyltransferase superfamily. RNA methyltransferase RsmG family.

Its subcellular location is the cytoplasm. It carries out the reaction guanosine(527) in 16S rRNA + S-adenosyl-L-methionine = N(7)-methylguanosine(527) in 16S rRNA + S-adenosyl-L-homocysteine. In terms of biological role, specifically methylates the N7 position of guanine in position 527 of 16S rRNA. This is Ribosomal RNA small subunit methyltransferase G from Polynucleobacter asymbioticus (strain DSM 18221 / CIP 109841 / QLW-P1DMWA-1) (Polynucleobacter necessarius subsp. asymbioticus).